A 215-amino-acid chain; its full sequence is Leucyl/phenylalanyl-tRNA--protein transferase (215 aa).

The protein belongs to the L/F-transferase family.

Its subcellular location is the cytoplasm. The catalysed reaction is N-terminal L-lysyl-[protein] + L-leucyl-tRNA(Leu) = N-terminal L-leucyl-L-lysyl-[protein] + tRNA(Leu) + H(+). It carries out the reaction N-terminal L-arginyl-[protein] + L-leucyl-tRNA(Leu) = N-terminal L-leucyl-L-arginyl-[protein] + tRNA(Leu) + H(+). The enzyme catalyses L-phenylalanyl-tRNA(Phe) + an N-terminal L-alpha-aminoacyl-[protein] = an N-terminal L-phenylalanyl-L-alpha-aminoacyl-[protein] + tRNA(Phe). Functionally, functions in the N-end rule pathway of protein degradation where it conjugates Leu, Phe and, less efficiently, Met from aminoacyl-tRNAs to the N-termini of proteins containing an N-terminal arginine or lysine. In Campylobacter jejuni subsp. jejuni serotype O:2 (strain ATCC 700819 / NCTC 11168), this protein is Leucyl/phenylalanyl-tRNA--protein transferase.